We begin with the raw amino-acid sequence, 153 residues long: Pro-corazonin (153 aa).

Residues 1 to 20 (MLRLLLLPLFLFTLSMACMG) form the signal peptide. Q21 is modified (pyrrolidone carboxylic acid). N31 is modified (asparagine amide). Residues 64-153 (LERCLLQLQH…AVEPNDYGKH (90 aa)) constitute a propeptide that is removed on maturation.

Belongs to the corazonin family. As to expression, expression is restricted to 24 neurons in the larval CNS (8 in the brain and 16 in the ventral nerve cord) and 12-16 neurons in the pars lateralis of the adult brain.

It localises to the secreted. In terms of biological role, cardioactive peptide. Corazonin is probably involved in the physiological regulation of the heart beat. Clock (Clk) and cycle (cyc) proteins negatively regulate Crz transcription in a cell-specific manner. The chain is Pro-corazonin (Crz) from Drosophila virilis (Fruit fly).